The sequence spans 72 residues: Hypotensin-1 (72 aa).

The signal sequence occupies residues 1-24; the sequence is MKMMIPVIFSILLLIFSLSSTAMS. A propeptide spanning residues 25–35 is cleaved from the precursor; sequence LEDEQENMEER. S41 carries the post-translational modification Phosphoserine. Residues 53-72 form a disordered region; sequence ETNAKPPARFDPAAFEKSDD. The propeptide occupies 61 to 72; the sequence is RFDPAAFEKSDD.

Belongs to the non-disulfide-bridged peptide (NDBP) superfamily. In terms of processing, undergoes enzymatic cleavages by carboxypeptidases, endopeptidases, and aminopeptidases resulting in at least 46 fragments of this protein. In terms of tissue distribution, expressed by the venom gland.

Its subcellular location is the secreted. Functionally, agonist of the B2 bradykinin receptor (BDKRB2). Potentiates the hypotensive effect of bradykinin (BK) and induces a direct vasorelaxing effect independent of BK, by endothelium- and nitric oxide (NO)-dependent mechanisms in rat aortic ring preparations. Also exerts proangiogenic, antiinflammatory, and antifibrogenic activities. Does not inhibit the angiotensin-converting enzyme (ACE) but increases its activity, and inhibits neprilysin (NEP) in a non-competitive manner. Exerts intermediate cytotoxicity and pro-inflammatory effects on mouse macrophages, and increases the phagocytic activity of these murine cells. In terms of biological role, presents moderate hemolytic activity at physiological concentrations (micromolar range). Does not induce mast cell degranulation, lactate dehydrogenase (LDH) release from mast cells and antimicrobial effects. In vivo, causes intense pain (but no edema formation), when injected in mice hind paws. Also induces discomfort and anxiety in mice, as it moderately diminishes locomotion and moderately increases rearing behavior. This is Hypotensin-1 from Tityus serrulatus (Brazilian scorpion).